Here is a 1302-residue protein sequence, read N- to C-terminus: Cingulin-like protein 1 (1302 aa).

The segment at 1–554 (MELYFGEYQH…ELTQQTNEET (554 aa)) is head. A ZIM motif is present at residues 37-51 (AGSYGVSIRVQGIDG). Positions 75–104 (PFPPPVINNLPLHSSNGSVPKENSEELQLP) are disordered. 2 positions are modified to phosphoserine: Ser-112 and Ser-202. Disordered regions lie at residues 186 to 209 (KKPW…EDPA), 251 to 305 (FTSG…TPTS), and 364 to 392 (PGLQ…VDSA). A compositionally biased stretch (polar residues) spans 195–204 (PSNSQPTSPS). A compositionally biased stretch (basic and acidic residues) spans 264–282 (AHPETKKTRPDVLPFRRQD). A phosphoserine mark is found at Ser-283, Ser-297, and Ser-298. The segment covering 296-305 (SSSSSTTPTS) has biased composition (low complexity). Over residues 366–377 (LQRRGRSGKRNR) the composition is skewed to basic residues. A compositionally biased stretch (basic and acidic residues) spans 378 to 388 (INTDDRKRSRS). Residues Ser-388, Ser-391, and Ser-486 each carry the phosphoserine modification. A coiled-coil region spans residues 604 to 1258 (NSTSEVKDLL…QLNSMKKDLR (655 aa)). Residues 655-664 (RSQHNEKVEE) show a composition bias toward basic and acidic residues. Positions 655-675 (RSQHNEKVEENSTLQQRLEES) are disordered. At Ser-708 the chain carries Phosphoserine. Disordered stretches follow at residues 903-929 (AAQG…SEQK) and 1263-1287 (PSKV…YEAP). A compositionally biased stretch (basic and acidic residues) spans 917 to 929 (QLSEKLKEESEQK). The segment at 1263 to 1302 (PSKVLDDMDDDDDLSTDGGSLYEAPVSYTFSKDSTVASQI) is tail.

Belongs to the cingulin family. In terms of assembly, homodimer or oligomer. Interacts with CD2AP and SH3BP1; probably part of a complex at cell junctions. Smooth muscle, spleen, testis, fetal brain, amygdala, corpus callosum, cerebellum, thalamus and subthalamic nucleus of adult brain.

It localises to the cell junction. The protein resides in the tight junction. Functionally, may be involved in anchoring the apical junctional complex, especially tight junctions, to actin-based cytoskeletons. This chain is Cingulin-like protein 1 (CGNL1), found in Homo sapiens (Human).